Consider the following 201-residue polypeptide: Ephrin-A4 (201 aa).

Positions 1 to 25 are cleaved as a signal peptide; it reads MRLLPLLRTVLWAAFLGSPLRGGSS. In terms of domain architecture, Ephrin RBD spans 26 to 155; the sequence is LRHVVYWNSS…RLQVSVCCKE (130 aa). N-linked (GlcNAc...) asparagine glycosylation is present at Asn33. 2 disulfide bridges follow: Cys58–Cys99 and Cys86–Cys144. The GPI-anchor amidated serine moiety is linked to residue Ser170. A propeptide spans 171-201 (removed in mature form); that stretch reads GTSGWRGGDTPSPLCLLLLLLLLILRLLRIL.

This sequence belongs to the ephrin family. In terms of tissue distribution, expressed in the adult spleen, lymph node, prostate, ovary, small intestine, and colon, and in fetal heart, lung, liver and kidney. Also detected in hematopoietic cell lines.

It is found in the cell membrane. The protein resides in the secreted. Cell surface GPI-bound ligand for Eph receptors, a family of receptor tyrosine kinases which are crucial for migration, repulsion and adhesion during neuronal, vascular and epithelial development. Binds promiscuously Eph receptors residing on adjacent cells, leading to contact-dependent bidirectional signaling into neighboring cells. May play a role in the interaction between activated B-lymphocytes and dendritic cells in tonsils. This Homo sapiens (Human) protein is Ephrin-A4 (EFNA4).